We begin with the raw amino-acid sequence, 383 residues long: MLDTNKVYEISNHANGLYAATYLSLDDSGVSLMNKNDDDIDDYNLKWFLFPIDDDQYIITSYAANNCKVWNVNNDKINVSTYSSTNSIQKWQIKANGSSYVIQSDNGKVLTAGTGQALGLIRLTDESSNNPNQQWNLTSVQTIQLPQKPIIDTKLKDYPKYSPTGNIDNGTSPQLMGWTLVPCIMVNDPNIDKNTQIKTTPYYILKKYQYWQRAVGSNVALRPHEKKSYTYEWGTEIDQKTTIINTLGFQINIDSGMKFDIPEVGGGTDEIKTQLNEELKIEYSHETKIMEKYQEQSEIDNPTDQSMNSIGFLTITSLELYRYNGSEIRIMQIQTSDNDTYNVTSYPNHQQALLLLTNHSYEEVEEITNIPKSTLKKLKKYYF.

A Ricin B-type lectin domain is found at 26 to 138 (DDSGVSLMNK…NNPNQQWNLT (113 aa)).

It belongs to the toxin_10 family. In terms of assembly, monomer in solution. Copurifies from parasporal inclusion bodies with Cry34Ab1. Proteolytic processing occurs near the C-terminus yielding a stable protein of approximately 40 kDa; this may be the active form of the protein.

Functionally, component of a binary insecticidal toxin active on western corn rootworm (WCR, Diabrotica virgifera subsp. virgifera Le Conte) and probably also on northern corn rootworm (D.barberi). Both proteins are required for maximal toxicity. The larval midgut epithelium is probably the primary target. This protein alone has no activity against southern corn rootworm (Diabrotica undecimpunctata howardi Barber), but it synergizes the toxic effect of its Cry34Ab1 partner. The 2 proteins individually and together form ion channels; channels made in the presence of the 2 proteins have higher conductance. Binds to WCR third instar midgut brush border membrane vesicles; binding improves over 10-fold in the presence of Cry34Ab1. The polypeptide is Insecticidal crystal protein Cry35Ab1 (Bacillus thuringiensis).